The chain runs to 587 residues: MSFEISREQYAGMFGPTTGDSIRLGDTNLFAKIEKDMTVYGDESKFGGGKCLRDGMGQSATELRRDNPKVVDLIITSAVILDYTGIYKADIGIRDGKIVAIGNGGNPSIMDNVDFIVGSSTEALSGEGLIVTAGGIDTHVHFITPAIAYSALENGTTTIIGGGTGPADGTNSATSTPGAWNIHQMLRAAEGMPVNMGIQGKAGGAIMDTTAEQIEAGAMALKVHEDWGATLSCIDHALETADKYDVQVSLHSDTLNETGFVEDTIKSIGGRCIHSYHTEGAGGGHAPDLMKVASKNNIIPSSTSPTNPYTVDILPEHLDMLMVCHHLDPKIPEDVRFADSRIRKQTIAAEDVLQDMGALSIMSSDTMAMGRIGEVIMRSWQLADKMKKQRGPLEGDSEYIDNNRIKRYISKYTINPAIAEGISDYVGSIEEGKYADLVLWEPAMFGAKPKMILKSGMIAYGVMGDSNASIPTTQPRTMRELFGLTGKSRQHVNMTFVSTYAYEHNIKEELGLERNVLPVHNVRTVTKKDMKFNSETPKIEIDPLTYDVTVDGKLITCDPARELPLAQRYLYTNLDKINILVYYKKIT.

In terms of domain architecture, Urease spans 134-572 (GGIDTHVHFI…LPLAQRYLYT (439 aa)). The Ni(2+) site is built by His-139, His-141, and Lys-222. N6-carboxylysine is present on Lys-222. His-224 contacts substrate. 2 residues coordinate Ni(2+): His-251 and His-277. His-325 (proton donor) is an active-site residue. Asp-365 lines the Ni(2+) pocket.

This sequence belongs to the metallo-dependent hydrolases superfamily. Urease alpha subunit family. Heterotrimer of UreA (gamma), UreB (beta) and UreC (alpha) subunits. Three heterotrimers associate to form the active enzyme. The cofactor is Ni cation. Post-translationally, carboxylation allows a single lysine to coordinate two nickel ions.

The protein resides in the cytoplasm. The enzyme catalyses urea + 2 H2O + H(+) = hydrogencarbonate + 2 NH4(+). The protein operates within nitrogen metabolism; urea degradation; CO(2) and NH(3) from urea (urease route): step 1/1. The chain is Urease subunit alpha from Clostridium perfringens.